Consider the following 202-residue polypeptide: Holliday junction resolvase RecU (202 aa).

The Mg(2+) site is built by Thr85, Asp87, Glu100, and Gln119.

It belongs to the RecU family. Mg(2+) serves as cofactor.

It is found in the cytoplasm. The enzyme catalyses Endonucleolytic cleavage at a junction such as a reciprocal single-stranded crossover between two homologous DNA duplexes (Holliday junction).. Endonuclease that resolves Holliday junction intermediates in genetic recombination. Cleaves mobile four-strand junctions by introducing symmetrical nicks in paired strands. Promotes annealing of linear ssDNA with homologous dsDNA. Required for DNA repair, homologous recombination and chromosome segregation. This is Holliday junction resolvase RecU from Streptococcus pyogenes serotype M6 (strain ATCC BAA-946 / MGAS10394).